A 413-amino-acid chain; its full sequence is Serine protease inhibitor A3L (413 aa).

Residues 1–28 (MAFIAALGLLMAGICPAVLCDGTLGRDT) form the signal peptide. Ser-30 is modified (phosphoserine). N-linked (GlcNAc...) asparagine glycosylation is found at Asn-102, Asn-182, Asn-220, and Asn-267. The segment at 365-389 (GTEATAATGVATVIRRQPRTLNFNR) is RCL.

This sequence belongs to the serpin family. N-glycosylated. Liver.

It is found in the secreted. This is Serine protease inhibitor A3L (Serpina3l) from Rattus norvegicus (Rat).